A 177-amino-acid polypeptide reads, in one-letter code: Glutamyl-tRNA(Gln) amidotransferase subunit F, mitochondrial (177 aa).

A mitochondrion-targeting transit peptide spans 1–16 (MIRINSRGLTVSTRRF). Residues 148–177 (PAKGETQGSFNVANMNPRNRPFATIRSKQG) form a disordered region. Over residues 153–164 (TQGSFNVANMNP) the composition is skewed to polar residues.

It belongs to the GatF family. Subunit of the heterotrimeric GatFAB amidotransferase (AdT) complex, composed of A, B and F subunits.

The protein resides in the mitochondrion inner membrane. The catalysed reaction is L-glutamyl-tRNA(Gln) + L-glutamine + ATP + H2O = L-glutaminyl-tRNA(Gln) + L-glutamate + ADP + phosphate + H(+). Its function is as follows. Allows the formation of correctly charged Gln-tRNA(Gln) through the transamidation of misacylated Glu-tRNA(Gln) in the mitochondria. The reaction takes place in the presence of glutamine and ATP through an activated gamma-phospho-Glu-tRNA(Gln). Required for proper protein synthesis within the mitochondrion. The polypeptide is Glutamyl-tRNA(Gln) amidotransferase subunit F, mitochondrial (Scheffersomyces stipitis (strain ATCC 58785 / CBS 6054 / NBRC 10063 / NRRL Y-11545) (Yeast)).